The sequence spans 115 residues: MNMLVTMLINTTLSFVLILIAFWLPQLNIYTEKANPYECGFDPMSSARLPFSMKFFLVAITFLLFDLEIALLLPMPWAMQTQDIKTMTLTAFILLSVLALGLAYEWTQKGLEWTE.

Transmembrane regions (helical) follow at residues 4-24 (LVTM…AFWL), 55-75 (FFLV…LLPM), and 86-106 (TMTL…AYEW).

It belongs to the complex I subunit 3 family. As to quaternary structure, core subunit of respiratory chain NADH dehydrogenase (Complex I) which is composed of 45 different subunits. Interacts with TMEM186. Interacts with TMEM242.

The protein resides in the mitochondrion inner membrane. The enzyme catalyses a ubiquinone + NADH + 5 H(+)(in) = a ubiquinol + NAD(+) + 4 H(+)(out). Its function is as follows. Core subunit of the mitochondrial membrane respiratory chain NADH dehydrogenase (Complex I) which catalyzes electron transfer from NADH through the respiratory chain, using ubiquinone as an electron acceptor. Essential for the catalytic activity of complex I. The polypeptide is NADH-ubiquinone oxidoreductase chain 3 (Nelsonia neotomodon (Diminutive woodrat)).